Reading from the N-terminus, the 152-residue chain is UPF0266 membrane protein plu2700 (152 aa).

The next 3 helical transmembrane spans lie at 6–26 (IALT…EFVV), 45–65 (IDAL…ITVY), and 67–87 (SRLT…IAYI).

This sequence belongs to the UPF0266 family.

The protein localises to the cell inner membrane. The polypeptide is UPF0266 membrane protein plu2700 (Photorhabdus laumondii subsp. laumondii (strain DSM 15139 / CIP 105565 / TT01) (Photorhabdus luminescens subsp. laumondii)).